A 1245-amino-acid polypeptide reads, in one-letter code: Nidogen-1 (1245 aa).

The signal sequence occupies residues 1–28; it reads MLDASGCSWAMWTWALLQLLLLVGPGGC. In terms of domain architecture, NIDO spans 106–268; the sequence is PFLADLDTTD…GVWVFEIGSP (163 aa). The N-linked (GlcNAc...) asparagine glycan is linked to asparagine 187. Residues tyrosine 290 and tyrosine 295 each carry the sulfotyrosine modification. O-linked (GalNAc...) threonine glycosylation occurs at threonine 299. A disordered region spans residues 307-344; it reads VATPSPSHSPRRGYPDPHNVPRILSPGYEATERPRGVP. Serine 331 carries an O-linked (GalNAc...) serine glycan. O-linked (GalNAc...) threonine glycans are attached at residues threonine 337 and threonine 345. Threonine 348 carries O-linked (GalNAc...) threonine; partial glycosylation. In terms of domain architecture, EGF-like 1 spans 384 to 424; it reads SQQTCANNRHQCSVHAECRDYATGFCCRCVANYTGNGRQCV. Disulfide bonds link cysteine 388-cysteine 401, cysteine 395-cysteine 410, cysteine 409-cysteine 616, cysteine 412-cysteine 423, cysteine 670-cysteine 683, cysteine 677-cysteine 693, cysteine 695-cysteine 706, cysteine 712-cysteine 725, cysteine 719-cysteine 734, cysteine 736-cysteine 748, cysteine 760-cysteine 775, cysteine 767-cysteine 785, cysteine 787-cysteine 798, cysteine 804-cysteine 815, cysteine 809-cysteine 824, cysteine 826-cysteine 837, cysteine 847-cysteine 876, cysteine 887-cysteine 894, and cysteine 896-cysteine 917. Residue asparagine 415 is glycosylated (N-linked (GlcNAc...) asparagine). In terms of domain architecture, Nidogen G2 beta-barrel spans 428 to 665; that stretch reads SPQRVNGKVK…GPVRDGSPDA (238 aa). The EGF-like 2 domain occupies 666 to 707; that stretch reads LQNPCYIGTHGCDSNAACRPGPGTQFTCECSIGFRGDGQTCY. Residues 700–702 carry the Cell attachment site motif; it reads RGD. The EGF-like 3; calcium-binding domain occupies 708–749; that stretch reads DIDECSEQPSRCGNHAVCNNLPGTFRCECVEGYHFSDRGTCV. Positions 756-799 constitute an EGF-like 4 domain; the sequence is PINYCETGLHNCDIPQRAQCIYMGGSSYTCSCLPGFSGDGRACR. The region spanning 800–838 is the EGF-like 5; calcium-binding domain; sequence DVDECQHSRCHPDAFCYNTPGSFTCQCKPGYQGDGFRCM. Residues 844–917 enclose the Thyroglobulin type-1 domain; it reads KTRCQLEREH…RTPPGMRPPC (74 aa). Threonine 920 and threonine 933 each carry an O-linked (GalNAc...) threonine glycan. LDL-receptor class B repeat units lie at residues 988-1030, 1031-1073, 1074-1118, and 1119-1160; these read KVVY…DHLG, RTIF…DPVR, GNLY…DAFS, and SQLC…YGKN. The EGF-like 6 domain maps to 1206–1242; sequence GHNYCSVNNGGCTHLCLPTPGSRTCRCPDNTLGVDCI. Disulfide bonds link cysteine 1210-cysteine 1221, cysteine 1217-cysteine 1230, and cysteine 1232-cysteine 1241.

As to quaternary structure, interacts with FBLN1. Interacts with LGALS3BP. Interacts with PLXDC1. Interacts with SVEP1. Post-translationally, N- and O-glycosylated.

It is found in the secreted. Its subcellular location is the extracellular space. It localises to the extracellular matrix. The protein localises to the basement membrane. Its function is as follows. Sulfated glycoprotein widely distributed in basement membranes and tightly associated with laminin. Also binds to collagen IV and perlecan. It probably has a role in cell-extracellular matrix interactions. This Mus musculus (Mouse) protein is Nidogen-1 (Nid1).